We begin with the raw amino-acid sequence, 79 residues long: Probable [Fe-S]-dependent transcriptional repressor (79 aa).

Positions 54, 59, 62, and 68 each coordinate iron-sulfur cluster.

It belongs to the FeoC family.

Functionally, may function as a transcriptional regulator that controls feoABC expression. The protein is Probable [Fe-S]-dependent transcriptional repressor of Photorhabdus laumondii subsp. laumondii (strain DSM 15139 / CIP 105565 / TT01) (Photorhabdus luminescens subsp. laumondii).